The following is a 228-amino-acid chain: UPF0502 protein Rfer_1648 (228 aa).

This sequence belongs to the UPF0502 family.

The protein is UPF0502 protein Rfer_1648 of Albidiferax ferrireducens (strain ATCC BAA-621 / DSM 15236 / T118) (Rhodoferax ferrireducens).